Reading from the N-terminus, the 21-residue chain is Nigrocin-2GRb (21 aa).

In terms of tissue distribution, expressed by the skin glands.

It localises to the secreted. Functionally, antimicrobial peptide active against the Gram-positive bacterium S.aureus (MIC=12.5 uM) and against the Gram-negative bacteria E.coli (MIC=3 uM). Has antifungal activity against C.albicans (MIC=50 uM). Has some hemolytic activity against human erythrocytes (LC(50)=40 uM). The protein is Nigrocin-2GRb of Odorrana grahami (Yunnanfu frog).